The sequence spans 617 residues: MGPIDTSQRLARLRELMQERKVDVYIVPSEDSHQSEYIAHCDGRREFISGFTGSAGCAIVSMTKAALSTDGRYFNQAAKQLDSNWILLKRGFENMPTWQEWTAEQAEGGKVVGVDPSLITAFDARNLSETIKKCGGSLLGVQENLVDLVWGTERPARPSEKVALHPIEFAGKSFEEKISDLRKELQKKKCAGFVISMLDEIAWLFNLRGNDIPYNPVFFAYAIITQSTADLYIDEEKLPAEVKNYLGDKVSLKPYGSIFEDAKVLGQSAQNKSDGEASTKPPQKFLISTRASWSLSLALGGEKNVEEVRSPITDAKAIKNEAELEGMRACHIRDGAALSEYFAWLENELVNKKTVLNEVDASDKLEQIRSKHQHFVGLSFDTISSTGPNAAVIHYKAERNNCSIIDPKAVYLCDSGAQYLDGTTDTTRTLHFGEPTEMEKKAYTLVLKGLISIDTAVFPKGTTGFALDAFARQYLWKEGLDYLHGTGHGVGSYLNVHEGPIGLGTRVQYSEVAIAPGNVISDEPGYYEDGVFGIRIENIIMAKEVKTTHKFGEKPWLGFEHVTMTPLCQKLINPSLLSDAEKKWVNDYHTEIWEKTSKYFENDELTRNWLKRETQPI.

Positions 414, 425, 523, and 537 each coordinate Mn(2+).

Belongs to the peptidase M24B family. The cofactor is Mn(2+).

The enzyme catalyses Release of any N-terminal amino acid, including proline, that is linked to proline, even from a dipeptide or tripeptide.. In terms of biological role, catalyzes the removal of a penultimate prolyl residue from the N-termini of peptides. This is Probable Xaa-Pro aminopeptidase P (AMPP) from Ajellomyces capsulatus (strain NAm1 / WU24) (Darling's disease fungus).